A 36-amino-acid chain; its full sequence is Photosystem I reaction center subunit VIII (36 aa).

Residues 8–28 (SIFVPLVGLVFPAIAMASLFL) form a helical membrane-spanning segment.

This sequence belongs to the PsaI family.

It is found in the plastid. It localises to the chloroplast thylakoid membrane. In terms of biological role, may help in the organization of the PsaL subunit. This chain is Photosystem I reaction center subunit VIII, found in Solanum bulbocastanum (Wild potato).